A 759-amino-acid polypeptide reads, in one-letter code: Arylphorin subunit A4 (759 aa).

Positions 1 to 16 are cleaved as a signal peptide; it reads MKIAIVLLAIIALVAA.

The protein belongs to the hemocyanin family. Heterohexamer. In terms of tissue distribution, fat body.

Its subcellular location is the secreted. The protein localises to the extracellular space. Functionally, arylphorin is a larval storage protein (LSP) which may serve as a storage protein used primarily as a source of aromatic amino acids for protein synthesis during metamorphosis. It is a constituent of the sclerotizing system of the cuticle, and serves as a carrier for ecdysteroid hormone. In Calliphora vicina (Blue blowfly), this protein is Arylphorin subunit A4.